A 715-amino-acid polypeptide reads, in one-letter code: Scinderin (715 aa).

Residues 1–363 are actin-severing; it reads MARELYHEEF…DGFGKVYVTE (363 aa). The Gelsolin-like 1 repeat unit spans residues 27–76; sequence LELVPVPQSAHGDFYVGDAYLVLHTAKTSRGFTYHLHFWLGKECSQDEST. Phosphotyrosine is present on Tyr-102. Residues 112–119 and 138–146 contribute to the a 1,2-diacyl-sn-glycero-3-phospho-(1D-myo-inositol-4,5-bisphosphate) site; these read KGGLKYKA and RLLHVKGRR. Gelsolin-like repeat units lie at residues 148-188, 265-307, 398-451, and 523-564; these read VRAT…YERL, VVAE…QERK, VEIW…DELT, and TRIV…EEEK. Residues 364–715 are ca(2+)-dependent actin binding; it reads KVAQIKQIPF…WFLGWDSSKW (352 aa). Asn-538, Asp-539, and Glu-562 together coordinate Ca(2+). Position 599 is a phosphotyrosine (Tyr-599). A Gelsolin-like 6 repeat occupies 626–668; the sequence is FVIEEIPGEFTQDDLAEDDVMLLDAWEQIFIWIGKDANEVEKK. Residues Asp-643, Asp-644, and Glu-666 each coordinate Ca(2+).

The protein belongs to the villin/gelsolin family. As to expression, expressed in megakaryocytes.

It is found in the cytoplasm. It localises to the cytoskeleton. The protein resides in the cell projection. The protein localises to the podosome. Its function is as follows. Ca(2+)-dependent actin filament-severing protein that has a regulatory function in exocytosis by affecting the organization of the microfilament network underneath the plasma membrane. Severing activity is inhibited by phosphatidylinositol 4,5-bis-phosphate (PIP2). In vitro, also has barbed end capping and nucleating activities in the presence of Ca(2+). Required for megakaryocyte differentiation, maturation, polyploidization and apoptosis with the release of platelet-like particles. Plays a role in osteoclastogenesis (OCG) and actin cytoskeletal organization in osteoclasts. Regulates chondrocyte proliferation and differentiation. Inhibits cell proliferation and tumorigenesis. Signaling is mediated by MAPK, p38 and JNK pathways. The sequence is that of Scinderin from Homo sapiens (Human).